A 1316-amino-acid chain; its full sequence is DNA-directed RNA polymerase subunit beta' (1316 aa).

Zn(2+) contacts are provided by cysteine 60, cysteine 62, cysteine 75, and cysteine 78. The segment at 183–209 (ELEEEGAKSDVRRKVRDGGEREMRQLR) is disordered. Positions 535, 537, and 539 each coordinate Mg(2+). Positions 890, 966, 973, and 976 each coordinate Zn(2+).

The protein belongs to the RNA polymerase beta' chain family. In terms of assembly, the RNAP catalytic core consists of 2 alpha, 1 beta, 1 beta' and 1 omega subunit. When a sigma factor is associated with the core the holoenzyme is formed, which can initiate transcription. Mg(2+) serves as cofactor. Zn(2+) is required as a cofactor.

It carries out the reaction RNA(n) + a ribonucleoside 5'-triphosphate = RNA(n+1) + diphosphate. In terms of biological role, DNA-dependent RNA polymerase catalyzes the transcription of DNA into RNA using the four ribonucleoside triphosphates as substrates. The sequence is that of DNA-directed RNA polymerase subunit beta' from Mycolicibacterium gilvum (strain PYR-GCK) (Mycobacterium gilvum (strain PYR-GCK)).